Reading from the N-terminus, the 419-residue chain is MAKTGVEILCVGTELLLGDILNGNARWLAQRLADLGLPHFRQTVVGDNTERLMGAVREAAGRCRILITTGGLGPTPDDLTTAALAAAFDTPLEERPELWEEIQAKLSAGGRAVAASNRSQAFLPIGADVLPNSLGSAPGMIWSPCPDFTILTFPGVPSEMRSMWVETAEPWLRQNAGAPSAFVSRRLHFTGIGESDLAEQVGDLLDSANPTVAPYAALGDVTLRLTASGSSPGQAEAVLHPMEEQLLQRTGRFCYGRDDDTLAAVVLRLLGEAGQTLAVAESCTGGALGAALTAVPGSSAVFSGGVIAYSNAVKQQLLGVPAALLDEHGAVSEPVVKAMAEGLRSRFHCDWGIAISGVAGPGGGTIEKPVGMVCLALAGREGCDLWVQRFGARRGRSAVQQLSVIRALDRLRLRLLAQS.

The protein belongs to the CinA family.

The polypeptide is CinA-like protein (Synechococcus sp. (strain CC9902)).